Reading from the N-terminus, the 220-residue chain is MKKIQIAIDGPASSGKSTVAKIIARNLDLIYLDTGAMYRVATFVALQKETDDAKEIIEFIEKNPISFMNGQKGQEVLMGSENVTEVIRTNEVTNTVSKISAMTEIREFMVAEQQRIAKNGGIIMDGRDIGTVVLPKADLKIFLVASVDERAERRYKENLSKGIPTDLERLKIEISERDRKDSTRAISPLKQAEDAILLDSTGKTINEIVQFIEDKAKELM.

10–18 (GPASSGKST) provides a ligand contact to ATP.

This sequence belongs to the cytidylate kinase family. Type 1 subfamily.

It localises to the cytoplasm. It carries out the reaction CMP + ATP = CDP + ADP. The enzyme catalyses dCMP + ATP = dCDP + ADP. The chain is Cytidylate kinase from Lactococcus lactis subsp. lactis (strain IL1403) (Streptococcus lactis).